The primary structure comprises 439 residues: tRNA modification GTPase MnmE (439 aa).

Residues arginine 24, glutamate 81, and lysine 121 each contribute to the (6S)-5-formyl-5,6,7,8-tetrahydrofolate site. In terms of domain architecture, TrmE-type G spans 218-363 (GFKVVIAGAP…LRRLIGDIVE (146 aa)). Asparagine 228 lines the K(+) pocket. Residues 228–233 (NAGKSS), 247–253 (TEIAGTT), and 272–275 (DTAG) each bind GTP. Residue serine 232 coordinates Mg(2+). Residues threonine 247, isoleucine 249, and threonine 252 each coordinate K(+). Threonine 253 is a binding site for Mg(2+). Lysine 439 contacts (6S)-5-formyl-5,6,7,8-tetrahydrofolate.

The protein belongs to the TRAFAC class TrmE-Era-EngA-EngB-Septin-like GTPase superfamily. TrmE GTPase family. In terms of assembly, homodimer. Heterotetramer of two MnmE and two MnmG subunits. K(+) serves as cofactor.

Its subcellular location is the cytoplasm. In terms of biological role, exhibits a very high intrinsic GTPase hydrolysis rate. Involved in the addition of a carboxymethylaminomethyl (cmnm) group at the wobble position (U34) of certain tRNAs, forming tRNA-cmnm(5)s(2)U34. This chain is tRNA modification GTPase MnmE, found in Rhizobium johnstonii (strain DSM 114642 / LMG 32736 / 3841) (Rhizobium leguminosarum bv. viciae).